The chain runs to 347 residues: Phosphate acyltransferase (347 aa).

It belongs to the PlsX family. As to quaternary structure, homodimer. Probably interacts with PlsY.

The protein localises to the cytoplasm. The enzyme catalyses a fatty acyl-[ACP] + phosphate = an acyl phosphate + holo-[ACP]. The protein operates within lipid metabolism; phospholipid metabolism. Its function is as follows. Catalyzes the reversible formation of acyl-phosphate (acyl-PO(4)) from acyl-[acyl-carrier-protein] (acyl-ACP). This enzyme utilizes acyl-ACP as fatty acyl donor, but not acyl-CoA. This is Phosphate acyltransferase from Methylobacillus flagellatus (strain ATCC 51484 / DSM 6875 / VKM B-1610 / KT).